Consider the following 249-residue polypeptide: Coproheme decarboxylase (249 aa).

Fe-coproporphyrin III-binding positions include Arg-131, 145–149, His-172, and Gln-185; that span reads YPMDK. Residue Tyr-145 is part of the active site.

The protein belongs to the ChdC family. Type 1 subfamily. Fe-coproporphyrin III is required as a cofactor.

The enzyme catalyses Fe-coproporphyrin III + 2 H2O2 + 2 H(+) = heme b + 2 CO2 + 4 H2O. It carries out the reaction Fe-coproporphyrin III + H2O2 + H(+) = harderoheme III + CO2 + 2 H2O. The catalysed reaction is harderoheme III + H2O2 + H(+) = heme b + CO2 + 2 H2O. It participates in porphyrin-containing compound metabolism; protoheme biosynthesis. Functionally, involved in coproporphyrin-dependent heme b biosynthesis. Catalyzes the decarboxylation of Fe-coproporphyrin III (coproheme) to heme b (protoheme IX), the last step of the pathway. The reaction occurs in a stepwise manner with a three-propionate intermediate. This chain is Coproheme decarboxylase, found in Staphylococcus epidermidis (strain ATCC 12228 / FDA PCI 1200).